The primary structure comprises 97 residues: Exodeoxyribonuclease 7 small subunit (97 aa).

Positions 1–22 (MAKTASPGATPPGNGTEPLPDN) are disordered.

This sequence belongs to the XseB family. In terms of assembly, heterooligomer composed of large and small subunits.

The protein resides in the cytoplasm. It catalyses the reaction Exonucleolytic cleavage in either 5'- to 3'- or 3'- to 5'-direction to yield nucleoside 5'-phosphates.. In terms of biological role, bidirectionally degrades single-stranded DNA into large acid-insoluble oligonucleotides, which are then degraded further into small acid-soluble oligonucleotides. This Burkholderia cenocepacia (strain HI2424) protein is Exodeoxyribonuclease 7 small subunit.